The following is a 418-amino-acid chain: cAMP-dependent protein kinase type II-beta regulatory subunit (418 aa).

The tract at residues 2–153 (SIEIPAGLTE…RLQEACKDIL (152 aa)) is dimerization and phosphorylation. Residues 45–57 (RKGTARFGHEGRT) show a composition bias toward basic and acidic residues. Residues 45-98 (RKGTARFGHEGRTWGDAGAAGGGGTPSKGVNFAEEPRHSDSENGEEEEEEAADA) are disordered. Thr-69 is subject to Phosphothreonine. A phosphoserine mark is found at Ser-83 and Ser-85. Residues 86–96 (ENGEEEEEEAA) are compositionally biased toward acidic residues. A Phosphoserine modification is found at Ser-114. Residues 154-275 (LFKN…ESLP), Glu-223, Arg-232, 276-418 (FLKS…EPTA), Glu-352, and Arg-361 contribute to the 3',5'-cyclic AMP site.

The protein belongs to the cAMP-dependent kinase regulatory chain family. The inactive form of the enzyme is composed of two regulatory chains and two catalytic chains. Activation by cAMP produces two active catalytic monomers and a regulatory dimer that binds four cAMP molecules. Interacts with PRKACA and PRKACB. Interacts with the phosphorylated form of PJA2. Forms a complex composed of PRKAR2B, GSK3B and GSKIP through GSKIP interaction; facilitates PKA-induced phosphorylation and regulates GSK3B activity. Post-translationally, phosphorylated by the activated catalytic chain. In terms of tissue distribution, four types of regulatory chains are found: I-alpha, I-beta, II-alpha, and II-beta. Their expression varies among tissues and is in some cases constitutive and in others inducible.

Its subcellular location is the cytoplasm. The protein localises to the cell membrane. Regulatory subunit of the cAMP-dependent protein kinases involved in cAMP signaling in cells. Type II regulatory chains mediate membrane association by binding to anchoring proteins, including the MAP2 kinase. The sequence is that of cAMP-dependent protein kinase type II-beta regulatory subunit (PRKAR2B) from Bos taurus (Bovine).